A 327-amino-acid polypeptide reads, in one-letter code: MSSNDSNDTDKQHTRLDPTGVDDAYIPPEQPETKHHRFKISKDTLRNHFIAAAGEFCGTFMFLWCAYVICNVANHDVALVAAPDGSHPGQLIMIAIGFGFSVMFSIWCFAGVSGGALNPAVSLSLCLARAVSPTRCVVMWVSQIVAGMAAGGAASAMTPGEVLFANSLGLGCSRTRGLFLEMFGTAILCLTVLMTAVEKRETNFMAALPIGISLFIAHVALTAYTGTGVNPARSLGAAVAARYFPHYHWIYWIGPLLGSILAWSVWQLLQILDYTTYVTAEKAASTKEKAQKKVKPAVPLLWLKSNFSLLFFISRSLALNVIIFGKN.

Residues 1–34 (MSSNDSNDTDKQHTRLDPTGVDDAYIPPEQPETK) are disordered. Residues 1–48 (MSSNDSNDTDKQHTRLDPTGVDDAYIPPEQPETKHHRFKISKDTLRNH) lie on the Cytoplasmic side of the membrane. Residues 49–69 (FIAAAGEFCGTFMFLWCAYVI) form a helical membrane-spanning segment. Residues 70–91 (CNVANHDVALVAAPDGSHPGQL) lie on the Extracellular side of the membrane. Residues 92–112 (IMIAIGFGFSVMFSIWCFAGV) form a helical membrane-spanning segment. Topologically, residues 113–136 (SGGALNPAVSLSLCLARAVSPTRC) are cytoplasmic. The NPA 1 motif lies at 118-120 (NPA). The chain crosses the membrane as a helical span at residues 137–157 (VVMWVSQIVAGMAAGGAASAM). Residues 158–176 (TPGEVLFANSLGLGCSRTR) lie on the Extracellular side of the membrane. Residues 177–197 (GLFLEMFGTAILCLTVLMTAV) form a helical membrane-spanning segment. Residues 198–203 (EKRETN) are Cytoplasmic-facing. Residues 204 to 224 (FMAALPIGISLFIAHVALTAY) form a helical membrane-spanning segment. Over 225–248 (TGTGVNPARSLGAAVAARYFPHYH) the chain is Extracellular. An NPA 2 motif is present at residues 230 to 232 (NPA). Residues 249 to 269 (WIYWIGPLLGSILAWSVWQLL) traverse the membrane as a helical segment. The Cytoplasmic segment spans residues 270-327 (QILDYTTYVTAEKAASTKEKAQKKVKPAVPLLWLKSNFSLLFFISRSLALNVIIFGKN).

The protein belongs to the MIP/aquaporin (TC 1.A.8) family.

Its subcellular location is the endoplasmic reticulum membrane. It localises to the cell membrane. In terms of biological role, water channel required to facilitate the transport of water across membranes. Involved in sporulation, freeze tolerance and osmotolerance. Is non-functional in most laboratory strains. This chain is Aquaporin-1 (AQY1), found in Saccharomyces cerevisiae (strain Lalvin EC1118 / Prise de mousse) (Baker's yeast).